A 61-amino-acid chain; its full sequence is Alpha-conotoxin-like PnMGMR-02 (61 aa).

Residues 1–21 (MGMRMMFTVFLLVVLATTVVS) form the signal peptide. Positions 22-44 (FTSDRASDGGNAAASDLIALTIK) are excised as a propeptide. 2 disulfide bridges follow: Cys-46–Cys-52 and Cys-47–Cys-60. Residues 48-50 (SRP) are ser-Xaa-Pro motif, crucial for potent interaction with nAChR. Cysteine amide is present on Cys-60.

This sequence belongs to the conotoxin A superfamily. As to expression, expressed by the venom duct.

The protein resides in the secreted. Alpha-conotoxins act on postsynaptic membranes, they bind to the nicotinic acetylcholine receptors (nAChR) and thus inhibit them. This toxin blocks mammalian nAChRs (alpha-7 &gt; alpha-3/beta-2). This chain is Alpha-conotoxin-like PnMGMR-02, found in Conus pennaceus (Feathered cone).